We begin with the raw amino-acid sequence, 1028 residues long: Collagen alpha-1(VI) chain (1028 aa).

A signal peptide spans 1 to 19 (MRAARALLPLLLQACWTAA). Residues 20 to 256 (QDEPETPRAV…CCSFECQPAR (237 aa)) form an N-terminal globular domain region. The VWFA 1 domain maps to 37–235 (DLFFVLDTSE…EAISQTIDTI (199 aa)). N-linked (GlcNAc...) asparagine glycosylation occurs at N212. The disordered stretch occupies residues 254–590 (PARGPPGLRG…GPPGHQGPPG (337 aa)). Positions 257-592 (GPPGLRGDPG…PGHQGPPGPD (336 aa)) are triple-helical region. The short motif at 262-264 (RGD) is the Cell attachment site element. Composition is skewed to basic and acidic residues over residues 268-285 (EGERGKPGLPGEKGEAGD) and 301-334 (KGEKGSRGEKGSRGPKGYKGEKGKRGIDGVDGVK). Low complexity predominate over residues 384–394 (RPGSSGPSGDE). Residues 442 to 444 (RGD) carry the Cell attachment site motif. Low complexity predominate over residues 457–471 (EGPVGVPGDPGEAGP). The Cell attachment site signature appears at 478-480 (RGD). A compositionally biased stretch (low complexity) spans 483 to 493 (PPGSEGARGAP). Residues N516 and N537 are each glycosylated (N-linked (GlcNAc...) asparagine). Residues 550–560 (GEAGDPGDDNN) are compositionally biased toward acidic residues. The span at 579–590 (PQGPPGHQGPPG) shows a compositional bias: pro residues. The interval 593–1028 (ECEILDIIMK…QTVSRKVALG (436 aa)) is C-terminal globular domain. VWFA domains are found at residues 615–805 (DLLF…LKNV) and 829–1021 (DITI…HQTV). N-linked (GlcNAc...) asparagine glycosylation is found at N804 and N896.

This sequence belongs to the type VI collagen family. As to quaternary structure, trimers composed of three different chains: alpha-1(VI), alpha-2(VI), and alpha-3(VI) or alpha-5(VI) or alpha-6(VI). Post-translationally, prolines at the third position of the tripeptide repeating unit (G-X-Y) are hydroxylated in some or all of the chains.

The protein resides in the secreted. Its subcellular location is the extracellular space. The protein localises to the extracellular matrix. In terms of biological role, collagen VI acts as a cell-binding protein. This chain is Collagen alpha-1(VI) chain (COL6A1), found in Homo sapiens (Human).